A 482-amino-acid polypeptide reads, in one-letter code: 6-phosphogluconate dehydrogenase, decarboxylating (482 aa).

NADP(+)-binding positions include glycine 17–glycine 22, asparagine 40–serine 42, valine 82–alanine 84, and asparagine 110. Residues asparagine 110 and serine 136 to glycine 138 each bind substrate. Lysine 193 acts as the Proton acceptor in catalysis. Histidine 196–asparagine 197 lines the substrate pocket. The Proton donor role is filled by glutamate 200. Positions 201, 272, 299, 457, and 463 each coordinate substrate.

Belongs to the 6-phosphogluconate dehydrogenase family. Homodimer.

It catalyses the reaction 6-phospho-D-gluconate + NADP(+) = D-ribulose 5-phosphate + CO2 + NADPH. Its pathway is carbohydrate degradation; pentose phosphate pathway; D-ribulose 5-phosphate from D-glucose 6-phosphate (oxidative stage): step 3/3. Functionally, catalyzes the oxidative decarboxylation of 6-phosphogluconate to ribulose 5-phosphate and CO(2), with concomitant reduction of NADP to NADPH. In Synechocystis sp. (strain ATCC 27184 / PCC 6803 / Kazusa), this protein is 6-phosphogluconate dehydrogenase, decarboxylating (gnd).